The primary structure comprises 335 residues: NADH-quinone oxidoreductase subunit H (335 aa).

8 helical membrane-spanning segments follow: residues 12–32 (IIAVVKAIVVLLAVVVCGALL), 81–101 (VIFTLAPVVAMSALLIAFAVI), 114–134 (IGLLFFFAMAGLSVYAVLFAG), 154–174 (VSYEVFMGLALMGIVVQVGSF), 187–207 (LWFIIPQFFGFCTFFIAGVAV), 238–258 (FFVGEYIGIILISALLVTLFF), 270–290 (SLAFFWFALKTAFFIMLFILL), and 307–327 (WKFCLPLTLINLLVTAAIVLL).

This sequence belongs to the complex I subunit 1 family. In terms of assembly, NDH-1 is composed of 13 different subunits. Subunits NuoA, H, J, K, L, M, N constitute the membrane sector of the complex.

It is found in the cell inner membrane. It carries out the reaction a quinone + NADH + 5 H(+)(in) = a quinol + NAD(+) + 4 H(+)(out). Functionally, NDH-1 shuttles electrons from NADH, via FMN and iron-sulfur (Fe-S) centers, to quinones in the respiratory chain. The immediate electron acceptor for the enzyme in this species is believed to be ubiquinone. Couples the redox reaction to proton translocation (for every two electrons transferred, four hydrogen ions are translocated across the cytoplasmic membrane), and thus conserves the redox energy in a proton gradient. This subunit may bind ubiquinone. In Pseudomonas syringae pv. syringae (strain B728a), this protein is NADH-quinone oxidoreductase subunit H.